A 625-amino-acid chain; its full sequence is Interleukin-1 receptor-associated kinase-like 2 (625 aa).

The Death domain occupies 13–94 (LDDPCRNMDA…RAAQIILNWK (82 aa)). The tract at residues 111-181 (KPEKPLAASV…SSDSKDFSTS (71 aa)) is disordered. Ser-144 carries the post-translational modification Phosphoserine. The span at 169–181 (LPTSSDSKDFSTS) shows a compositional bias: polar residues. The 294-residue stretch at 210–503 (FNQNHKISQG…GSVAAVEEWL (294 aa)) folds into the Protein kinase domain. ATP contacts are provided by residues 216–224 (ISQGTFADV), Lys-237, and 337–340 (KSSN). The segment at 513 to 539 (SGLSEGTGSSSNTPEETDDVDNSSLDA) is disordered. Over residues 516–526 (SEGTGSSSNTP) the composition is skewed to polar residues.

It belongs to the protein kinase superfamily. TKL Ser/Thr protein kinase family. Pelle subfamily. In terms of assembly, interacts with MYD88. IL-1 stimulation leads to the formation of a signaling complex which dissociates from the IL-1 receptor following the binding of PELI1.

Binds to the IL-1 type I receptor following IL-1 engagement, triggering intracellular signaling cascades leading to transcriptional up-regulation and mRNA stabilization. The chain is Interleukin-1 receptor-associated kinase-like 2 (IRAK2) from Pongo abelii (Sumatran orangutan).